A 329-amino-acid chain; its full sequence is Serpentine receptor class alpha-3 (329 aa).

Helical transmembrane passes span 25 to 45, 57 to 77, 104 to 124, 144 to 164, 187 to 207, 238 to 258, and 273 to 293; these read LIYF…LKVI, ILLY…GITI, YLEM…GLLF, GIIT…IIIW, TMFF…SLLI, ICFL…GVFL, and FWVV…ILLI.

Belongs to the nematode receptor-like protein sra family.

The protein resides in the membrane. The protein is Serpentine receptor class alpha-3 (sra-3) of Caenorhabditis elegans.